Here is a 314-residue protein sequence, read N- to C-terminus: Regulator of microtubule dynamics protein 1 (314 aa).

The residue at position 165 (Lys-165) is an N6-succinyllysine. TPR repeat units lie at residues 168 to 204 and 222 to 258; these read AICLSDVGDYEGIKAKIANAYIIKEHFEKAIELNPKD and PWYQRRIAKMLFATPPSSTYEKALGYFHRAEQVDPNF.

Belongs to the RMDN family. In terms of assembly, interacts with microtubules.

The protein localises to the cytoplasm. The protein resides in the cytoskeleton. Its subcellular location is the spindle. It localises to the spindle pole. This Homo sapiens (Human) protein is Regulator of microtubule dynamics protein 1 (RMDN1).